A 276-amino-acid polypeptide reads, in one-letter code: NAD-capped RNA hydrolase NudC (276 aa).

Arg-82 contacts substrate. Zn(2+)-binding residues include Cys-112 and Cys-115. Glu-125 lines the substrate pocket. The Zn(2+) site is built by Cys-130 and Cys-133. Tyr-138 is a binding site for substrate. Residues 139–262 (PRISPSMIVL…SIARYLIDVY (124 aa)) form the Nudix hydrolase domain. A divalent metal cation-binding residues include Ala-172, Glu-188, and Glu-192. The Nudix box motif lies at 173–194 (GFAEPGESAEDCLIREVREEVQ). 206–213 (QCWPFPHS) is a substrate binding site. Glu-233 contacts a divalent metal cation. A substrate-binding site is contributed by Ala-255.

Belongs to the Nudix hydrolase family. NudC subfamily. Homodimer. Mg(2+) is required as a cofactor. It depends on Mn(2+) as a cofactor. The cofactor is Zn(2+).

The catalysed reaction is a 5'-end NAD(+)-phospho-ribonucleoside in mRNA + H2O = a 5'-end phospho-adenosine-phospho-ribonucleoside in mRNA + beta-nicotinamide D-ribonucleotide + 2 H(+). It catalyses the reaction NAD(+) + H2O = beta-nicotinamide D-ribonucleotide + AMP + 2 H(+). The enzyme catalyses NADH + H2O = reduced beta-nicotinamide D-ribonucleotide + AMP + 2 H(+). Functionally, mRNA decapping enzyme that specifically removes the nicotinamide adenine dinucleotide (NAD) cap from a subset of mRNAs by hydrolyzing the diphosphate linkage to produce nicotinamide mononucleotide (NMN) and 5' monophosphate mRNA. The NAD-cap is present at the 5'-end of some mRNAs and stabilizes RNA against 5'-processing. Has preference for mRNAs with a 5'-end purine. Catalyzes the hydrolysis of a broad range of dinucleotide pyrophosphates. This Pseudomonas fluorescens (strain Pf0-1) protein is NAD-capped RNA hydrolase NudC.